The following is a 366-amino-acid chain: Growth/differentiation factor 3 (366 aa).

Positions 1-22 are cleaved as a signal peptide; sequence MQPYQRLLALGFLLLTLPWGQT. The propeptide occupies 23–252; that stretch reads SEFQDSDLLQ…HCHPSSRKRR (230 aa). N-linked (GlcNAc...) asparagine glycosylation is found at Asn-113 and Asn-308. 3 cysteine pairs are disulfide-bonded: Cys-266–Cys-331, Cys-295–Cys-363, and Cys-299–Cys-365.

It belongs to the TGF-beta family. In terms of assembly, homodimer. Heterodimer (Potential). But, in contrast to other members of this family, cannot be disulfide-linked. Synthesized as large precursor molecule that undergo proteolytic cleavage, releasing the pro-domain from the active, receptor binding, C-terminal region of the molecule. As to expression, primarily in adult bone marrow, spleen, thymus and adipose tissue.

It localises to the secreted. The protein resides in the cytoplasm. Growth factor involved in early embryonic development and adipose-tissue homeostasis. During embryogenesis controls formation of anterior visceral endoderm and mesoderm and the establishment of anterior-posterior identity through a receptor complex comprising the receptor ACVR1B and the coreceptor CRIPTO. Regulates adipose-tissue homeostasis and energy balance under nutrient overload in part by signaling through the receptor complex based on ACVR1C and CRIPTO. The sequence is that of Growth/differentiation factor 3 (Gdf3) from Mus musculus (Mouse).